The sequence spans 133 residues: Napin-1 (133 aa).

2 propeptides span residues 31 to 49 (PSWT…EKQG) and 131 to 133 (PSY).

It belongs to the 2S seed storage albumins family. In terms of assembly, the mature protein consists of a small and a large chain linked by disulfide bonds. In terms of tissue distribution, cotyledons and the axis.

The small, basic, water-soluble napins are one of the two major kinds of storage proteins synthesized in the seed during its maturation. The chain is Napin-1 from Brassica napus (Rape).